The following is a 393-amino-acid chain: Erythronate-4-phosphate dehydrogenase (393 aa).

Ser57 and Thr79 together coordinate substrate. Residue Asp159 coordinates NAD(+). The active site involves Arg229. Asp253 serves as a coordination point for NAD(+). The active site involves Glu258. The active-site Proton donor is the His275. An NAD(+)-binding site is contributed by Gly278. Residue Tyr279 participates in substrate binding.

It belongs to the D-isomer specific 2-hydroxyacid dehydrogenase family. PdxB subfamily. As to quaternary structure, homodimer.

Its subcellular location is the cytoplasm. The enzyme catalyses 4-phospho-D-erythronate + NAD(+) = (R)-3-hydroxy-2-oxo-4-phosphooxybutanoate + NADH + H(+). It participates in cofactor biosynthesis; pyridoxine 5'-phosphate biosynthesis; pyridoxine 5'-phosphate from D-erythrose 4-phosphate: step 2/5. Functionally, catalyzes the oxidation of erythronate-4-phosphate to 3-hydroxy-2-oxo-4-phosphonooxybutanoate. This chain is Erythronate-4-phosphate dehydrogenase, found in Colwellia psychrerythraea (strain 34H / ATCC BAA-681) (Vibrio psychroerythus).